Consider the following 395-residue polypeptide: Dihydroorotate dehydrogenase (quinone), mitochondrial (395 aa).

The transit peptide at 1-10 (MAWRQLKKRA) directs the protein to the mitochondrion; not cleaved. The Mitochondrial matrix portion of the chain corresponds to 1–10 (MAWRQLKKRA). Residues 11–30 (QDAMVILGGGGLLFASYLTA) traverse the membrane as a helical segment. Residues 31–395 (TGDEHFYAEL…TDAIGADHRR (365 aa)) are Mitochondrial intermembrane-facing. Residues 95–99 (AGFDK) and serine 119 each bind FMN. Residue lysine 99 coordinates substrate. 144–148 (NRYGF) serves as a coordination point for substrate. Asparagine 180 and asparagine 211 together coordinate FMN. Residue 211–216 (NVSSPN) coordinates substrate. The Nucleophile role is filled by serine 214. The FMN site is built by lysine 254 and threonine 282. 283–284 (NS) lines the substrate pocket. Residues glycine 305, glycine 334, and 355–356 (YT) each bind FMN.

It belongs to the dihydroorotate dehydrogenase family. Type 2 subfamily. As to quaternary structure, monomer. The cofactor is FMN. The uncleaved transit peptide is required for mitochondrial targeting and proper membrane integration.

It is found in the mitochondrion inner membrane. It carries out the reaction (S)-dihydroorotate + a quinone = orotate + a quinol. It functions in the pathway pyrimidine metabolism; UMP biosynthesis via de novo pathway; orotate from (S)-dihydroorotate (quinone route): step 1/1. Catalyzes the conversion of dihydroorotate to orotate with quinone as electron acceptor. Required for UMP biosynthesis via de novo pathway. In Bos taurus (Bovine), this protein is Dihydroorotate dehydrogenase (quinone), mitochondrial (DHODH).